The chain runs to 124 residues: Large ribosomal subunit protein bL19 (124 aa).

It belongs to the bacterial ribosomal protein bL19 family.

Its function is as follows. This protein is located at the 30S-50S ribosomal subunit interface and may play a role in the structure and function of the aminoacyl-tRNA binding site. This is Large ribosomal subunit protein bL19 from Acidiphilium cryptum (strain JF-5).